We begin with the raw amino-acid sequence, 150 residues long: Large ribosomal subunit protein bL9 (150 aa).

It belongs to the bacterial ribosomal protein bL9 family.

Functionally, binds to the 23S rRNA. In Shewanella sediminis (strain HAW-EB3), this protein is Large ribosomal subunit protein bL9.